The following is a 445-amino-acid chain: MIEVDQSAGAPVRKHKFYQILYVQVLVAIVIGVLLGYFKPDLGEAMKPLGDGFIKLVKMIIAPVIFLTVTTGIAAMSDLKKVGRVAGKAMVYFLVFSTLALIIGMVVSHIVQPGAGLHIDPASLDQKSVAGYVTKAHDSTITGFLLNIIPATMLSPFVGGDILQVLFVAVLFGLSLAMVGPRAQPITDFFNALSAPVFKLVAILMKAAPIGAFGAMAFTIGKYGIKSIVNLAMLVGTFYATSVLFVVVVLGMVARYNGFSIIKLVRYIREELLLVLGTSSSEAALPTLMEKMERAGCSKSVVGLVVPTGYSFNLDGTNIYMTMAALFIAQACDIPLSLGDQILLLLVAMLSSKGAAGVTGAGFITLAATLSVVPTVPVAGMALILGVDRFMSECRALTNLVGNATASIVVARWEGELDKTALHVALNSDGELPSTDPTSPARQGH.

8 consecutive transmembrane segments (helical) span residues phenylalanine 17–tyrosine 37, leucine 56–methionine 76, valine 91–valine 111, phenylalanine 157–alanine 177, leucine 200–isoleucine 220, methionine 233–valine 253, isoleucine 319–glycine 339, and alanine 367–valine 387.

Belongs to the dicarboxylate/amino acid:cation symporter (DAACS) (TC 2.A.23) family.

Its subcellular location is the cell inner membrane. In terms of biological role, responsible for the transport of dicarboxylates such as succinate, fumarate, and malate from the periplasm across the membrane. In Bordetella avium (strain 197N), this protein is C4-dicarboxylate transport protein.